A 723-amino-acid chain; its full sequence is Catalase-peroxidase (723 aa).

Positions 1-29 are cleaved as a signal peptide; the sequence is MDGNDLVENKCPVMHGGITVAGHSNTAWW. A cross-link (tryptophyl-tyrosyl-methioninium (Trp-Tyr) (with M-251)) is located at residues 97–225; it reads WHSAGSYRLA…LAAVQMGLIY (129 aa). H98 (proton acceptor) is an active-site residue. Positions 225–251 form a cross-link, tryptophyl-tyrosyl-methioninium (Tyr-Met) (with W-97); it reads YVNPEGVNGKSDPLKSAAQVRETFARM. H266 contributes to the heme b binding site.

This sequence belongs to the peroxidase family. Peroxidase/catalase subfamily. Homodimer or homotetramer. Heme b serves as cofactor. In terms of processing, formation of the three residue Trp-Tyr-Met cross-link is important for the catalase, but not the peroxidase activity of the enzyme.

It carries out the reaction H2O2 + AH2 = A + 2 H2O. The catalysed reaction is 2 H2O2 = O2 + 2 H2O. Its function is as follows. Bifunctional enzyme with both catalase and broad-spectrum peroxidase activity. The chain is Catalase-peroxidase from Hyphomonas neptunium (strain ATCC 15444).